The chain runs to 253 residues: GTP cyclohydrolase III 2 (253 aa).

Positions 102–125 (LRDAGSAQDENRQEALSHRSPPGF) are disordered.

The protein belongs to the archaeal-type GTP cyclohydrolase family.

It carries out the reaction GTP + 3 H2O = 2-amino-5-formylamino-6-(5-phospho-D-ribosylamino)pyrimidin-4(3H)-one + 2 phosphate + 2 H(+). In terms of biological role, catalyzes the formation of 2-amino-5-formylamino-6-ribofuranosylamino-4(3H)-pyrimidinone ribonucleotide monophosphate and inorganic phosphate from GTP. Also has an independent pyrophosphate phosphohydrolase activity. The protein is GTP cyclohydrolase III 2 (gch32) of Halobacterium salinarum (strain ATCC 700922 / JCM 11081 / NRC-1) (Halobacterium halobium).